A 222-amino-acid polypeptide reads, in one-letter code: Imidazoleglycerol-phosphate dehydratase (222 aa).

The protein belongs to the imidazoleglycerol-phosphate dehydratase family.

The enzyme catalyses D-erythro-1-(imidazol-4-yl)glycerol 3-phosphate = 3-(imidazol-4-yl)-2-oxopropyl phosphate + H2O. The protein operates within amino-acid biosynthesis; L-histidine biosynthesis; L-histidine from 5-phospho-alpha-D-ribose 1-diphosphate: step 6/9. This chain is Imidazoleglycerol-phosphate dehydratase (HIS3), found in Scheffersomyces stipitis (strain ATCC 58785 / CBS 6054 / NBRC 10063 / NRRL Y-11545) (Yeast).